The following is a 338-amino-acid chain: Glyceraldehyde-3-phosphate dehydrogenase (338 aa).

Residues 12–13, Asp-34, and Arg-79 each bind NAD(+); that span reads RI. Residues 150–152, Thr-181, 210–211, and Arg-233 each bind D-glyceraldehyde 3-phosphate; these read SCT and TG. Catalysis depends on Cys-151, which acts as the Nucleophile. Asn-315 serves as a coordination point for NAD(+).

The protein belongs to the glyceraldehyde-3-phosphate dehydrogenase family. In terms of assembly, homotetramer.

It localises to the cytoplasm. It carries out the reaction D-glyceraldehyde 3-phosphate + phosphate + NAD(+) = (2R)-3-phospho-glyceroyl phosphate + NADH + H(+). The protein operates within carbohydrate degradation; glycolysis; pyruvate from D-glyceraldehyde 3-phosphate: step 1/5. The protein is Glyceraldehyde-3-phosphate dehydrogenase (GPD) of Sordaria macrospora.